We begin with the raw amino-acid sequence, 365 residues long: Palmitoyltransferase ZDHHC20 (365 aa).

Residues 1–14 (MAPCTLWRCCQRTV) are Cytoplasmic-facing. Residues 15–35 (GWVPVLFITFVVVWSYYAYVV) traverse the membrane as a helical segment. Residues 36–53 (ELCVFTLSGNGENGKAVV) are Lumenal-facing. The chain crosses the membrane as a helical span at residues 54-74 (YLVAFHLFFVMFVWSYWMTIF). Topologically, residues 75–169 (TSPASPSKEF…NNCVGFSNYK (95 aa)) are cytoplasmic. The DHHC domain occupies 126–176 (RYCERCQLIKPDRAHHCSACDMCILKMDHHCPWVNNCVGFSNYKFFLLFLF). Residues Cys-128 and Cys-131 each coordinate Zn(2+). Substrate contacts are provided by residues Lys-135 and 140 to 143 (HHCS). 5 residues coordinate Zn(2+): His-141, Cys-142, Cys-145, Cys-148, and His-155. Catalysis depends on Cys-156, which acts as the S-palmitoyl cysteine intermediate. Zn(2+) is bound at residue Cys-162. Residues 170-190 (FFLLFLFYSLLYCLFVATTVL) form a helical membrane-spanning segment. At 191 to 207 (QYFIKFWTNELTDTRAK) the chain is on the lumenal side. A helical transmembrane segment spans residues 208-231 (FHVLFLFFVSTMFFISVLSLLSYH). Topologically, residues 232–365 (CWLVGKNRTT…NNHVTVAIEN (134 aa)) are cytoplasmic. The tract at residues 301 to 365 (PEQASVSNQS…NNHVTVAIEN (65 aa)) is disordered. The span at 302–321 (EQASVSNQSESARSIGSNQP) shows a compositional bias: polar residues. A phosphoserine mark is found at Ser-305 and Ser-330.

The protein belongs to the DHHC palmitoyltransferase family. In terms of processing, autopalmitoylated (in vitro).

It localises to the golgi apparatus membrane. The protein resides in the cell membrane. Its subcellular location is the cytoplasm. The protein localises to the perinuclear region. It is found in the endoplasmic reticulum membrane. It localises to the endoplasmic reticulum-Golgi intermediate compartment membrane. It catalyses the reaction L-cysteinyl-[protein] + hexadecanoyl-CoA = S-hexadecanoyl-L-cysteinyl-[protein] + CoA. The enzyme catalyses L-cysteinyl-[protein] + tetradecanoyl-CoA = S-tetradecanoyl-L-cysteinyl-[protein] + CoA. The catalysed reaction is L-cysteinyl-[protein] + octadecanoyl-CoA = S-octadecanoyl-L-cysteinyl-[protein] + CoA. In terms of biological role, palmitoyltransferase that could catalyze the addition of palmitate onto various protein substrates. Catalyzes palmitoylation of Cys residues in the cytoplasmic C-terminus of EGFR, and modulates the duration of EGFR signaling by modulating palmitoylation-dependent EGFR internalization and degradation. Has a preference for acyl-CoA with C16 fatty acid chains. Can also utilize acyl-CoA with C14 and C18 fatty acid chains. May palmitoylate CALHM1 subunit of gustatory voltage-gated ion channels and modulate channel gating and kinetics. The protein is Palmitoyltransferase ZDHHC20 of Bos taurus (Bovine).